The chain runs to 874 residues: Alanine--tRNA ligase (874 aa).

Zn(2+) is bound by residues His564, His568, Cys665, and His669.

Belongs to the class-II aminoacyl-tRNA synthetase family. Zn(2+) serves as cofactor.

The protein resides in the cytoplasm. It carries out the reaction tRNA(Ala) + L-alanine + ATP = L-alanyl-tRNA(Ala) + AMP + diphosphate. Functionally, catalyzes the attachment of alanine to tRNA(Ala) in a two-step reaction: alanine is first activated by ATP to form Ala-AMP and then transferred to the acceptor end of tRNA(Ala). Also edits incorrectly charged Ser-tRNA(Ala) and Gly-tRNA(Ala) via its editing domain. The protein is Alanine--tRNA ligase of Polaromonas naphthalenivorans (strain CJ2).